Here is a 317-residue protein sequence, read N- to C-terminus: Protoheme IX farnesyltransferase (317 aa).

A run of 9 helical transmembrane segments spans residues 28–48 (IIPL…HGHI), 53–73 (LLIT…LNCI), 101–121 (LIFA…FVNL), 122–142 (LSAC…THWL), 150–170 (IVIG…AVTG), 178–198 (ILFA…ALMI), 223–243 (IWIY…PFQA), 246–266 (LFYA…AWEL), and 282–302 (YSIL…LPAV).

Belongs to the UbiA prenyltransferase family. Protoheme IX farnesyltransferase subfamily.

Its subcellular location is the cell inner membrane. The catalysed reaction is heme b + (2E,6E)-farnesyl diphosphate + H2O = Fe(II)-heme o + diphosphate. The protein operates within porphyrin-containing compound metabolism; heme O biosynthesis; heme O from protoheme: step 1/1. Its function is as follows. Converts heme B (protoheme IX) to heme O by substitution of the vinyl group on carbon 2 of heme B porphyrin ring with a hydroxyethyl farnesyl side group. The chain is Protoheme IX farnesyltransferase from Picosynechococcus sp. (strain ATCC 27264 / PCC 7002 / PR-6) (Agmenellum quadruplicatum).